Consider the following 450-residue polypeptide: MSKVIGIDLGTTNSVVAVMEGGEPTVITNTEGSRLTPSVVGFSKTGERLVGQLAKRQAVSNPENTISSIKRHMGESYTVDIQGKKYTPQEISAMILQKLKEDAESYLGEKVTQAVITVPAYFNDGQRQATKDAGKIAGLDVLRIVNEPTAAALAYGLDKGGDGKILVFDLGGGTFDVSILELGDGVFEVKATNGNTHLGGDDFDNKVMEWMISEFKKETGIDLSQDKMAEQRLKEAAEKAKIELSTVLSTNINLPFITADATGPKHLDLTLTRAKFNELTEDLVQATMEPTKKAIADSGFTIDEIDKIILVGGSSRIPAVQEAIKSILGKEPSKGVNPDECVAIGAAIQAGVLVGDVKDVLLLDVTPLSLGIETLGGVFTKIIDRNTTIPTSRSQVFSTAVDNQPSVDVHVLQGRREMAADNKTLGRFELTGIPAAPRGVPRIEVTFNID.

T174 carries the post-translational modification Phosphothreonine; by autocatalysis.

This sequence belongs to the heat shock protein 70 family.

In terms of biological role, acts as a chaperone. The chain is Chaperone protein DnaK (dnaK) from Megasphaera elsdenii.